We begin with the raw amino-acid sequence, 361 residues long: Mitochondrial import receptor subunit TOM40 homolog (361 aa).

Residues M1–S73 are disordered. The span at P11 to T36 shows a compositional bias: pro residues. Over residues L40–T50 the composition is skewed to gly residues. Residues G51 to S69 show a composition bias toward low complexity.

This sequence belongs to the Tom40 family. As to quaternary structure, forms part of the preprotein translocase complex of the outer mitochondrial membrane (TOM complex) which consists of at least 7 different proteins (TOMM5, TOMM6, TOMM7, TOMM20, TOMM22, TOMM40 and TOMM70). Interacts with mitochondrial targeting sequences. Interacts with TIMM29; linking the TIM22 complex to the TOM complex. Forms a complex with BCAP31 (via C-terminus) which mediates the translocation of components of the mitochondrial membrane respiratory chain NADH dehydrogenase (Complex I) from the cytosol to the mitochondria. Interacts (via N-terminus) with CYP1A1 (via mitochondrial targeting signal); this interaction is required for CYP1A1 translocation across the mitochondrial outer membrane.

The protein resides in the mitochondrion outer membrane. Its function is as follows. Channel-forming protein essential for import of protein precursors into mitochondria. Plays a role in the assembly of the mitochondrial membrane respiratory chain NADH dehydrogenase (Complex I) by forming a complex with BCAP31 and mediating the translocation of Complex I components from the cytosol to the mitochondria. This Mus musculus (Mouse) protein is Mitochondrial import receptor subunit TOM40 homolog (Tomm40).